A 183-amino-acid chain; its full sequence is Transmembrane protein 52B (183 aa).

Residues 1–24 (MGVRVHVVAASALLYFILLSGTRC) form the signal peptide. Residues 40–60 (VHLWYIWLLVVIGALLLLCGL) traverse the membrane as a helical segment. The segment at 158-183 (DLPPVPEEKQLPPTEKESTRIVDSWN) is disordered. Basic and acidic residues predominate over residues 163–177 (PEEKQLPPTEKESTR).

It localises to the membrane. The sequence is that of Transmembrane protein 52B (TMEM52B) from Homo sapiens (Human).